Reading from the N-terminus, the 245-residue chain is Uridylate kinase (245 aa).

15-18 (KLSG) lines the ATP pocket. Positions 23-28 (GDEGFG) are involved in allosteric activation by GTP. Gly57 lines the UMP pocket. Gly58 and Arg62 together coordinate ATP. Residues Asp77 and 138–145 (TGNPFCTT) contribute to the UMP site. Residues Thr165, Tyr171, and Asp174 each coordinate ATP.

Belongs to the UMP kinase family. Homohexamer.

The protein resides in the cytoplasm. It catalyses the reaction UMP + ATP = UDP + ADP. Its pathway is pyrimidine metabolism; CTP biosynthesis via de novo pathway; UDP from UMP (UMPK route): step 1/1. With respect to regulation, allosterically activated by GTP. Inhibited by UTP. In terms of biological role, catalyzes the reversible phosphorylation of UMP to UDP. In Shewanella baltica (strain OS155 / ATCC BAA-1091), this protein is Uridylate kinase.